The sequence spans 250 residues: MARLILLRHGQSAWNLENRFTGWTDVDLSPAGEAEALAAARLIRDEGLDFSVCHTSMLTRAIRTLHLVQQELDRLWTPVRKHWRLNERHYGALQGLDKRETAARHGEDQVFVWRRSYDVPPPVIAPDDPKHPVHDPRYADVPPDVLPCGESLEATVARVLPYWYDAIAPDLMAGRDVLVAAHGNSLRALVMHLDGLDREDVSRLDIPTGLPRLYELDAALRPVSYRYLGDPAEAEERARAVAAQGRLEKN.

Substrate is bound by residues 8–15 (RHGQSAWN), 21–22 (TG), arginine 60, 87–90 (ERHY), lysine 98, 114–115 (RR), and 183–184 (GN). The Tele-phosphohistidine intermediate role is filled by histidine 9. The active-site Proton donor/acceptor is the glutamate 87.

It belongs to the phosphoglycerate mutase family. BPG-dependent PGAM subfamily. In terms of assembly, homodimer.

The catalysed reaction is (2R)-2-phosphoglycerate = (2R)-3-phosphoglycerate. It participates in carbohydrate degradation; glycolysis; pyruvate from D-glyceraldehyde 3-phosphate: step 3/5. Its function is as follows. Catalyzes the interconversion of 2-phosphoglycerate and 3-phosphoglycerate. The chain is 2,3-bisphosphoglycerate-dependent phosphoglycerate mutase from Nitratidesulfovibrio vulgaris (strain ATCC 29579 / DSM 644 / CCUG 34227 / NCIMB 8303 / VKM B-1760 / Hildenborough) (Desulfovibrio vulgaris).